Reading from the N-terminus, the 54-residue chain is uncharacterized protein (54 aa).

Basic and acidic residues predominate over residues 1–28 (MDRKKDEIQRKYREQMREKKEREKEDGS). Residues 1-29 (MDRKKDEIQRKYREQMREKKEREKEDGSS) form a disordered region. Residues 31–51 (TFEIVVVLAIIILMFFFNSVF) traverse the membrane as a helical segment.

Its subcellular location is the cell membrane. This is an uncharacterized protein from Bacillus subtilis (strain 168).